The sequence spans 118 residues: MSTLNQAHCEACSAGAPQVSEAELPELLRQIPDWNIEVRDSVMQLEKVFLFKNFKFALAFTNAVGEIAEAEGHHPGLLTEWGKVTVTWWSHSIKGLHRNDFIMAARTDEVAAKAEGRK.

Belongs to the pterin-4-alpha-carbinolamine dehydratase family.

It catalyses the reaction (4aS,6R)-4a-hydroxy-L-erythro-5,6,7,8-tetrahydrobiopterin = (6R)-L-erythro-6,7-dihydrobiopterin + H2O. Its function is as follows. Involved in tetrahydrobiopterin biosynthesis. Seems to both prevent the formation of 7-pterins and accelerate the formation of quinonoid-BH2. May also have a positive regulatory role in the expression of phhA. The protein is Pterin-4-alpha-carbinolamine dehydratase (phhB) of Pseudomonas syringae pv. tomato (strain ATCC BAA-871 / DC3000).